The sequence spans 626 residues: Basic helix-loop-helix ARNT-like protein 1 (626 aa).

The disordered stretch occupies residues 1 to 60 (MADQRMDISSTISDFMSPGPTDLLSSSLGTSGVDCNRKRKGSSTDYQESMDTDKDDPHGR). The residue at position 17 (serine 17) is a Phosphoserine; by GSK3-beta. Positions 17–32 (SPGPTDLLSSSLGTSG) are enriched in low complexity. Threonine 21 carries the phosphothreonine; by GSK3-beta modification. Positions 36 to 41 (NRKRKG) match the Nuclear localization signal motif. Residues 51 to 60 (DTDKDDPHGR) are compositionally biased toward basic and acidic residues. Residues 72–125 (NAREAHSQIEKRRRDKMNSFIDELASLVPTCNAMSRKLDKLTVLRMAVQHMKTL) enclose the bHLH domain. Serine 78 carries the post-translational modification Phosphoserine. Serine 90 bears the Phosphoserine; by CK2 mark. Residues 142–152 (LSDDELKHLIL) carry the Nuclear export signal 1 motif. Residues 143–215 (SDDELKHLIL…EQLSSSDTAP (73 aa)) enclose the PAS 1 domain. Residue lysine 252 forms a Glycyl lysine isopeptide (Lys-Gly) (interchain with G-Cter in SUMO2 and SUMO3) linkage. Residue lysine 259 forms a Glycyl lysine isopeptide (Lys-Gly) (interchain with G-Cter in SUMO); alternate linkage. Residue lysine 259 forms a Glycyl lysine isopeptide (Lys-Gly) (interchain with G-Cter in SUMO2); alternate linkage. A PAS 2 domain is found at 326-396 (PQPAGGDIKV…ECHRQVLQTR (71 aa)). The Nuclear export signal 2 motif lies at 361–369 (LAYLPQELL). In terms of domain architecture, PAC spans 402 to 445 (NCYKFKIKDGSFITLRSRWFSFMNPWTKEVEYIVSTNTVVLANV). Disordered regions lie at residues 458 to 493 (ASPH…AGAG) and 511 to 596 (GSSP…PSND). A compositionally biased stretch (gly residues) spans 484–493 (IPGGTRAGAG). The segment at 508 to 588 (RIRGSSPSSC…ISIDMIDNDQ (81 aa)) is interaction with CIART. Over residues 511–521 (GSSPSSCGSSP) the composition is skewed to low complexity. Lysine 538 is subject to N6-acetyllysine.

In terms of assembly, component of the circadian clock oscillator which includes the CRY1/2 proteins, CLOCK or NPAS2, BMAL1 or BMAL2, CSNK1D and/or CSNK1E, TIMELESS and the PER1/2/3 proteins. Forms a heterodimer with CLOCK. The CLOCK-BMAL1 heterodimer is required for E-box-dependent transactivation, for CLOCK nuclear translocation and degradation, and, for phosphorylation of both CLOCK and BMAL1. Part of a nuclear complex which also includes RACK1 and PRKCA; RACK1 and PRKCA are recruited to the complex in a circadian manner. Interacts with NPAS2. Interacts with EZH2. Interacts with SUMO3. Interacts with SIRT1. Interacts with AHR. Interacts with ID1, ID2 and ID3. Interacts with DDX4. Interacts with OGT. Interacts with EED and SUZ12. Interacts with MTA1. Interacts with CIART. Interacts with HSP90. Interacts with KAT2B and EP300. Interacts with BHLHE40/DEC1 and BHLHE41/DEC2. Interacts with RELB and the interaction is enhanced in the presence of CLOCK. Interacts with PER1, PER2, CRY1 and CRY2 and this interaction requires a translocation to the nucleus. Interaction of the CLOCK-BMAL1 heterodimer with PER or CRY inhibits transcription activation. Interaction of the CLOCK-BMAL1 with CRY1 is independent of DNA but with PER2 is off DNA. The CLOCK-BMAL1 heterodimer interacts with GSK3B. Interacts with KDM5A. Interacts with KMT2A; in a circadian manner. Interacts with UBE3A. Interacts with PRKCG. Interacts with MAGEL2. Interacts with NCOA2. Interacts with THRAP3. The CLOCK-BMAL1 heterodimer interacts with PASD1. Interacts with PASD1. Interacts with USP9X. Interacts with PIWIL2 (via PIWI domain). Interacts with HDAC3. Interacts with HNF4A. Post-translationally, ubiquitinated, leading to its proteasomal degradation. Deubiquitinated by USP9X. In terms of processing, O-glycosylated; contains O-GlcNAc. O-glycosylation by OGT prevents protein degradation by inhibiting ubiquitination. It also stabilizes the CLOCK-BMAL1 heterodimer thereby increasing CLOCK-BMAL1-mediated transcription of genes in the negative loop of the circadian clock such as PER1/2/3 and CRY1/2. Acetylated on Lys-538 by CLOCK during the repression phase of the circadian cycle. Acetylation facilitates recruitment of CRY1 protein and initiates the repression phase of the circadian cycle. Acetylated at Lys-538 by KAT5 during the activation phase of the cycle, leading to recruitment of the positive transcription elongation factor b (P-TEFb) and BRD4, followed by productive elongation of circadian transcripts. Deacetylated by SIRT1, which may result in decreased protein stability. Post-translationally, phosphorylated upon dimerization with CLOCK. Phosphorylation enhances the transcriptional activity, alters the subcellular localization and decreases the stability of the CLOCK-BMAL1 heterodimer by promoting its degradation. Phosphorylation shows circadian variations in the liver with a peak between CT10 to CT14. Phosphorylation at Ser-90 by CK2 is essential for its nuclear localization, its interaction with CLOCK and controls CLOCK nuclear entry. Dephosphorylation at Ser-78 is important for dimerization with CLOCK and transcriptional activity. In terms of processing, sumoylated on Lys-259 upon dimerization with CLOCK. Predominantly conjugated to poly-SUMO2/3 rather than SUMO1 and the level of these conjugates undergo rhythmic variation, peaking at CT9-CT12. Sumoylation localizes it exclusively to the PML body and promotes its ubiquitination in the PML body, ubiquitin-dependent proteasomal degradation and the transcriptional activity of the CLOCK-BMAL1 heterodimer. Undergoes lysosome-mediated degradation in a time-dependent manner in the liver. In terms of tissue distribution, highly expressed in the suprachiasmatic nucleus (SCN). Also expressed in all other tissues examined including kidney, intestine, liver, heart, spleen, brain, muscle, lung, harderian gland and eye. Low expression in kidney and spleen.

It localises to the nucleus. The protein localises to the cytoplasm. The protein resides in the PML body. Transcriptional activator which forms a core component of the circadian clock. The circadian clock, an internal time-keeping system, regulates various physiological processes through the generation of approximately 24 hour circadian rhythms in gene expression, which are translated into rhythms in metabolism and behavior. It is derived from the Latin roots 'circa' (about) and 'diem' (day) and acts as an important regulator of a wide array of physiological functions including metabolism, sleep, body temperature, blood pressure, endocrine, immune, cardiovascular, and renal function. Consists of two major components: the central clock, residing in the suprachiasmatic nucleus (SCN) of the brain, and the peripheral clocks that are present in nearly every tissue and organ system. Both the central and peripheral clocks can be reset by environmental cues, also known as Zeitgebers (German for 'timegivers'). The predominant Zeitgeber for the central clock is light, which is sensed by retina and signals directly to the SCN. The central clock entrains the peripheral clocks through neuronal and hormonal signals, body temperature and feeding-related cues, aligning all clocks with the external light/dark cycle. Circadian rhythms allow an organism to achieve temporal homeostasis with its environment at the molecular level by regulating gene expression to create a peak of protein expression once every 24 hours to control when a particular physiological process is most active with respect to the solar day. Transcription and translation of core clock components (CLOCK, NPAS2, BMAL1, BMAL2, PER1, PER2, PER3, CRY1 and CRY2) plays a critical role in rhythm generation, whereas delays imposed by post-translational modifications (PTMs) are important for determining the period (tau) of the rhythms (tau refers to the period of a rhythm and is the length, in time, of one complete cycle). A diurnal rhythm is synchronized with the day/night cycle, while the ultradian and infradian rhythms have a period shorter and longer than 24 hours, respectively. Disruptions in the circadian rhythms contribute to the pathology of cardiovascular diseases, cancer, metabolic syndromes and aging. A transcription/translation feedback loop (TTFL) forms the core of the molecular circadian clock mechanism. Transcription factors, CLOCK or NPAS2 and BMAL1 or BMAL2, form the positive limb of the feedback loop, act in the form of a heterodimer and activate the transcription of core clock genes and clock-controlled genes (involved in key metabolic processes), harboring E-box elements (5'-CACGTG-3') within their promoters. The core clock genes: PER1/2/3 and CRY1/2 which are transcriptional repressors form the negative limb of the feedback loop and interact with the CLOCK|NPAS2-BMAL1|BMAL2 heterodimer inhibiting its activity and thereby negatively regulating their own expression. This heterodimer also activates nuclear receptors NR1D1/2 and RORA/B/G, which form a second feedback loop and which activate and repress BMAL1 transcription, respectively. BMAL1 positively regulates myogenesis and negatively regulates adipogenesis via the transcriptional control of the genes of the canonical Wnt signaling pathway. Plays a role in normal pancreatic beta-cell function; regulates glucose-stimulated insulin secretion via the regulation of antioxidant genes NFE2L2/NRF2 and its targets SESN2, PRDX3, CCLC and CCLM. Negatively regulates the mTORC1 signaling pathway; regulates the expression of MTOR and DEPTOR. Controls diurnal oscillations of Ly6C inflammatory monocytes; rhythmic recruitment of the PRC2 complex imparts diurnal variation to chemokine expression that is necessary to sustain Ly6C monocyte rhythms. Regulates the expression of HSD3B2, STAR, PTGS2, CYP11A1, CYP19A1 and LHCGR in the ovary and also the genes involved in hair growth. Plays an important role in adult hippocampal neurogenesis by regulating the timely entry of neural stem/progenitor cells (NSPCs) into the cell cycle and the number of cell divisions that take place prior to cell-cycle exit. Regulates the circadian expression of CIART and KLF11. The CLOCK-BMAL1 heterodimer regulates the circadian expression of SERPINE1/PAI1, VWF, B3, CCRN4L/NOC, NAMPT, DBP, MYOD1, PPARGC1A, PPARGC1B, SIRT1, GYS2, F7, NGFR, GNRHR, BHLHE40/DEC1, ATF4, MTA1, KLF10 and also genes implicated in glucose and lipid metabolism. Promotes rhythmic chromatin opening, regulating the DNA accessibility of other transcription factors. The NPAS2-BMAL1 heterodimer positively regulates the expression of MAOA, F7 and LDHA and modulates the circadian rhythm of daytime contrast sensitivity by regulating the rhythmic expression of adenylate cyclase type 1 (ADCY1) in the retina. The preferred binding motif for the CLOCK-BMAL1 heterodimer is 5'-CACGTGA-3', which contains a flanking adenine nucleotide at the 3-prime end of the canonical 6-nucleotide E-box sequence. CLOCK specifically binds to the half-site 5'-CAC-3', while BMAL1 binds to the half-site 5'-GTGA-3'. The CLOCK-BMAL1 heterodimer also recognizes the non-canonical E-box motifs 5'-AACGTGA-3' and 5'-CATGTGA-3'. Essential for the rhythmic interaction of CLOCK with ASS1 and plays a critical role in positively regulating CLOCK-mediated acetylation of ASS1. Plays a role in protecting against lethal sepsis by limiting the expression of immune checkpoint protein CD274 in macrophages in a PKM2-dependent manner. Regulates the diurnal rhythms of skeletal muscle metabolism via transcriptional activation of genes promoting triglyceride synthesis (DGAT2) and metabolic efficiency (COQ10B). The sequence is that of Basic helix-loop-helix ARNT-like protein 1 (Bmal1) from Nannospalax galili (Northern Israeli blind subterranean mole rat).